We begin with the raw amino-acid sequence, 92 residues long: Small ribosomal subunit protein uS19 (92 aa).

It belongs to the universal ribosomal protein uS19 family.

In terms of biological role, protein S19 forms a complex with S13 that binds strongly to the 16S ribosomal RNA. In Trichlorobacter lovleyi (strain ATCC BAA-1151 / DSM 17278 / SZ) (Geobacter lovleyi), this protein is Small ribosomal subunit protein uS19.